A 92-amino-acid polypeptide reads, in one-letter code: Small ribosomal subunit protein uS17 (92 aa).

The protein belongs to the universal ribosomal protein uS17 family. Part of the 30S ribosomal subunit.

In terms of biological role, one of the primary rRNA binding proteins, it binds specifically to the 5'-end of 16S ribosomal RNA. In Wigglesworthia glossinidia brevipalpis, this protein is Small ribosomal subunit protein uS17.